The primary structure comprises 353 residues: uncharacterized protein (353 aa).

This is an uncharacterized protein from Methanocaldococcus jannaschii (strain ATCC 43067 / DSM 2661 / JAL-1 / JCM 10045 / NBRC 100440) (Methanococcus jannaschii).